The chain runs to 400 residues: Probable splicing factor YJU2B (400 aa).

The tract at residues 1–26 (MGERKGVNKYYPPDFNPEKHGSLNRY) is disordered. Ser40 carries the post-translational modification Phosphoserine. A coiled-coil region spans residues 182–214 (LNSMLRKRFREKKKAMQEEEERDQALQAKASLA). The interval 255-400 (WFPSTPGASA…VADYSGSESE (146 aa)) is disordered. Polar residues predominate over residues 283 to 292 (RRATPTSSPV). Ser310 carries the phosphoserine modification. Positions 327 to 341 (EGTNQNRPVSPQDCS) are enriched in polar residues. Residues 364-380 (PQPPPDTSPEAPNPQDT) show a composition bias toward pro residues.

Belongs to the CWC16 family.

It localises to the nucleus. Functionally, may be involved in mRNA splicing. This Bos taurus (Bovine) protein is Probable splicing factor YJU2B (YJU2B).